The sequence spans 436 residues: UDP-N-acetylmuramate--L-alanine ligase (436 aa).

Position 108–114 (108–114 (GAHGKTS)) interacts with ATP.

Belongs to the MurCDEF family.

It localises to the cytoplasm. It carries out the reaction UDP-N-acetyl-alpha-D-muramate + L-alanine + ATP = UDP-N-acetyl-alpha-D-muramoyl-L-alanine + ADP + phosphate + H(+). Its pathway is cell wall biogenesis; peptidoglycan biosynthesis. Its function is as follows. Cell wall formation. The polypeptide is UDP-N-acetylmuramate--L-alanine ligase (Bacillus cereus (strain G9842)).